The primary structure comprises 396 residues: Elongation factor Tu (396 aa).

In terms of domain architecture, tr-type G spans 10–206; sequence KPHVNVGTIG…ALDSYIPEPE (197 aa). Residues 19–26 form a G1 region; sequence GHVDHGKT. GTP is bound at residue 19-26; the sequence is GHVDHGKT. Thr-26 is a Mg(2+) binding site. The tract at residues 60 to 64 is G2; sequence GITIN. The interval 81 to 84 is G3; it reads DCPG. GTP is bound by residues 81–85 and 136–139; these read DCPGH and NKAD. The segment at 136–139 is G4; sequence NKAD. A G5 region spans residues 174-176; that stretch reads SAL.

The protein belongs to the TRAFAC class translation factor GTPase superfamily. Classic translation factor GTPase family. EF-Tu/EF-1A subfamily. As to quaternary structure, monomer.

Its subcellular location is the cytoplasm. It carries out the reaction GTP + H2O = GDP + phosphate + H(+). GTP hydrolase that promotes the GTP-dependent binding of aminoacyl-tRNA to the A-site of ribosomes during protein biosynthesis. The polypeptide is Elongation factor Tu (Nitrosomonas europaea (strain ATCC 19718 / CIP 103999 / KCTC 2705 / NBRC 14298)).